We begin with the raw amino-acid sequence, 264 residues long: [LysW]-aminoadipate/[LysW]-glutamate kinase (264 aa).

Residues 35-36, Arg62, and Asn167 each bind substrate; that span reads GG.

This sequence belongs to the acetylglutamate kinase family. LysZ subfamily.

The protein resides in the cytoplasm. The catalysed reaction is [amino-group carrier protein]-C-terminal-N-(1,4-dicarboxybutan-1-yl)-L-glutamine + ATP = [amino-group carrier protein]-C-terminal-N-(1-carboxy-5-phosphooxy-5-oxopentan-1-yl)-L-glutamine + ADP. It catalyses the reaction [amino-group carrier protein]-C-terminal-gamma-(L-glutamyl)-L-glutamate + ATP = [amino-group carrier protein]-C-terminal-gamma-(5-phospho-L-glutamyl)-L-glutamate + ADP. The protein operates within amino-acid biosynthesis; L-lysine biosynthesis via AAA pathway; L-lysine from L-alpha-aminoadipate (Thermus route): step 2/5. It participates in amino-acid biosynthesis; L-arginine biosynthesis. In terms of biological role, involved in both the arginine and lysine biosynthetic pathways. Phosphorylates the LysW-bound precursors glutamate (for arginine biosynthesis), respectively alpha-aminoadipate (for lysine biosynthesis). In Saccharolobus solfataricus (strain ATCC 35092 / DSM 1617 / JCM 11322 / P2) (Sulfolobus solfataricus), this protein is [LysW]-aminoadipate/[LysW]-glutamate kinase.